A 453-amino-acid polypeptide reads, in one-letter code: Fibrinogen gamma chain (453 aa).

A signal peptide spans 1–26 (MSWSLHPRNLILYFYALLFLSSTCVA). At serine 68 the chain carries Phosphoserine; by FAM20C. Asparagine 78 carries an N-linked (GlcNAc...) (complex) asparagine glycan. The 247-residue stretch at 170–416 (QIHDITGKDC…KTTMKIIPFN (247 aa)) folds into the Fibrinogen C-terminal domain. Cysteine 179 and cysteine 208 form a disulfide bridge. Asparagine 334 carries N-linked (GlcNAc...) asparagine; in variant Asahi glycosylation. Ca(2+) is bound by residues aspartate 344, aspartate 346, phenylalanine 348, and glycine 350. A disulfide bridge links cysteine 352 with cysteine 365. Residues 400-422 (TRWYSMKKTTMKIIPFNRLTIGE) are gamma-chain polymerization, binding amino end of another fibrin alpha chain. The tract at residues 423-437 (GQQHHLGGAKQVRPE) is platelet aggregation and Staphylococcus clumping. An Isoglutamyl lysine isopeptide (Gln-Lys) (interchain with K-432) cross-link involves residue glutamine 424. Positions 424-453 (QQHHLGGAKQVRPEHPAETEYDSLYPEDDL) are disordered. Lysine 432 is covalently cross-linked (Isoglutamyl lysine isopeptide (Lys-Gln) (interchain with Q-424)). Acidic residues predominate over residues 442–453 (TEYDSLYPEDDL). Residues tyrosine 444 and tyrosine 448 each carry the sulfotyrosine modification.

Heterohexamer; disulfide linked. Contains 2 sets of 3 non-identical chains (alpha, beta and gamma). The 2 heterotrimers are in head to head conformation with the N-termini in a small central domain. In terms of processing, conversion of fibrinogen to fibrin is triggered by thrombin, which cleaves fibrinopeptides A and B from alpha and beta chains, and thus exposes the N-terminal polymerization sites responsible for the formation of the soft clot. The soft clot is converted into the hard clot by factor XIIIA which catalyzes the epsilon-(gamma-glutamyl)lysine cross-linking between gamma chains (stronger) and between alpha chains (weaker) of different monomers. Post-translationally, sulfation of C-terminal tyrosines increases affinity for thrombin. As to expression, detected in blood plasma (at protein level).

The protein localises to the secreted. Functionally, together with fibrinogen alpha (FGA) and fibrinogen beta (FGB), polymerizes to form an insoluble fibrin matrix. Has a major function in hemostasis as one of the primary components of blood clots. In addition, functions during the early stages of wound repair to stabilize the lesion and guide cell migration during re-epithelialization. Was originally thought to be essential for platelet aggregation, based on in vitro studies using anticoagulated blood. However, subsequent studies have shown that it is not absolutely required for thrombus formation in vivo. Enhances expression of SELP in activated platelets via an ITGB3-dependent pathway. Maternal fibrinogen is essential for successful pregnancy. Fibrin deposition is also associated with infection, where it protects against IFNG-mediated hemorrhage. May also facilitate the antibacterial immune response via both innate and T-cell mediated pathways. This chain is Fibrinogen gamma chain (FGG), found in Homo sapiens (Human).